A 342-amino-acid chain; its full sequence is Endolytic peptidoglycan transglycosylase RlpA (342 aa).

The first 26 residues, 1–26 (MSKRVRSSLILPAVCGLGLAAVLLSS), serve as a signal peptide directing secretion. A lipid anchor (N-palmitoyl cysteine) is attached at cysteine 27. Cysteine 27 is lipidated: S-diacylglycerol cysteine. An SPOR domain is found at 261–342 (SLPADGLYLQ…LGQPTLVRPD (82 aa)).

The protein belongs to the RlpA family.

It is found in the cell membrane. Its function is as follows. Lytic transglycosylase with a strong preference for naked glycan strands that lack stem peptides. In Pseudomonas aeruginosa (strain ATCC 15692 / DSM 22644 / CIP 104116 / JCM 14847 / LMG 12228 / 1C / PRS 101 / PAO1), this protein is Endolytic peptidoglycan transglycosylase RlpA.